We begin with the raw amino-acid sequence, 260 residues long: Pyridoxine 5'-phosphate synthase (260 aa).

3-amino-2-oxopropyl phosphate contacts are provided by Asn7 and Arg18. The active-site Proton acceptor is His43. 1-deoxy-D-xylulose 5-phosphate contacts are provided by Arg45 and His50. The Proton acceptor role is filled by Glu83. Residue Thr113 participates in 1-deoxy-D-xylulose 5-phosphate binding. The active-site Proton donor is the His208. 3-amino-2-oxopropyl phosphate is bound by residues Asp209 and 230-231; that span reads GH.

This sequence belongs to the PNP synthase family. In terms of assembly, homooctamer; tetramer of dimers.

The protein resides in the cytoplasm. The enzyme catalyses 3-amino-2-oxopropyl phosphate + 1-deoxy-D-xylulose 5-phosphate = pyridoxine 5'-phosphate + phosphate + 2 H2O + H(+). It functions in the pathway cofactor biosynthesis; pyridoxine 5'-phosphate biosynthesis; pyridoxine 5'-phosphate from D-erythrose 4-phosphate: step 5/5. Its function is as follows. Catalyzes the complicated ring closure reaction between the two acyclic compounds 1-deoxy-D-xylulose-5-phosphate (DXP) and 3-amino-2-oxopropyl phosphate (1-amino-acetone-3-phosphate or AAP) to form pyridoxine 5'-phosphate (PNP) and inorganic phosphate. The protein is Pyridoxine 5'-phosphate synthase of Leptospira biflexa serovar Patoc (strain Patoc 1 / Ames).